Here is a 144-residue protein sequence, read N- to C-terminus: Small ribosomal subunit protein bS6 (144 aa).

Residues 97 to 144 (DTEQSLIMKSKDEKGDKPERSERRRRDDEEGDAAPAATDTDGDNAEAA) are disordered. Residues 105-124 (KSKDEKGDKPERSERRRRDD) show a composition bias toward basic and acidic residues.

It belongs to the bacterial ribosomal protein bS6 family.

Functionally, binds together with bS18 to 16S ribosomal RNA. This Xanthomonas campestris pv. campestris (strain 8004) protein is Small ribosomal subunit protein bS6.